The sequence spans 128 residues: UPF0102 protein Acry_2261 (128 aa).

It belongs to the UPF0102 family.

The protein is UPF0102 protein Acry_2261 of Acidiphilium cryptum (strain JF-5).